The chain runs to 202 residues: uncharacterized protein (202 aa).

An START domain is found at 1 to 202; sequence MRGILRMTVL…KGLRSAAEKR (202 aa).

Its function is as follows. May play a role in the interaction of the bacterium with animal cells. This is an uncharacterized protein from Pseudomonas aeruginosa (strain ATCC 15692 / DSM 22644 / CIP 104116 / JCM 14847 / LMG 12228 / 1C / PRS 101 / PAO1).